The following is a 432-amino-acid chain: Anaerobic glycerol-3-phosphate dehydrogenase subunit B (432 aa).

Belongs to the anaerobic G-3-P dehydrogenase subunit B family. In terms of assembly, composed of a catalytic GlpA/B dimer and of membrane bound GlpC. The cofactor is FMN.

The catalysed reaction is a quinone + sn-glycerol 3-phosphate = dihydroxyacetone phosphate + a quinol. It participates in polyol metabolism; glycerol degradation via glycerol kinase pathway; glycerone phosphate from sn-glycerol 3-phosphate (anaerobic route): step 1/1. Its function is as follows. Conversion of glycerol 3-phosphate to dihydroxyacetone. Uses fumarate or nitrate as electron acceptor. This chain is Anaerobic glycerol-3-phosphate dehydrogenase subunit B, found in Haemophilus influenzae (strain PittGG).